Reading from the N-terminus, the 200-residue chain is Ribonuclease HII (200 aa).

The RNase H type-2 domain occupies 14–200; that stretch reads SRLAGVDEVG…FAPVKQWQLL (187 aa). A divalent metal cation is bound by residues aspartate 20, glutamate 21, and aspartate 112.

It belongs to the RNase HII family. Mn(2+) serves as cofactor. Mg(2+) is required as a cofactor.

The protein resides in the cytoplasm. The enzyme catalyses Endonucleolytic cleavage to 5'-phosphomonoester.. In terms of biological role, endonuclease that specifically degrades the RNA of RNA-DNA hybrids. The polypeptide is Ribonuclease HII (Chromohalobacter salexigens (strain ATCC BAA-138 / DSM 3043 / CIP 106854 / NCIMB 13768 / 1H11)).